We begin with the raw amino-acid sequence, 204 residues long: Rho GDP-dissociation inhibitor 1 (204 aa).

A disordered region spans residues Met1–Gln36. Ala2 is modified (N-acetylalanine). Phosphoserine is present on Ser34. The residue at position 43 (Lys43) is an N6-acetyllysine. Ser47 carries the post-translational modification Phosphoserine. Positions Asn66–Pro83 are hydrophobic. Phosphoserine; by PKA is present on Ser101. Position 105 is an N6-acetyllysine (Lys105). Ser115 is subject to Phosphoserine; by PKC. Lys127 carries the post-translational modification N6-acetyllysine. Glycyl lysine isopeptide (Lys-Gly) (interchain with G-Cter in SUMO1); alternate cross-links involve residues Lys138 and Lys141. Residues Lys138 and Lys141 each participate in a glycyl lysine isopeptide (Lys-Gly) (interchain with G-Cter in SUMO2); alternate cross-link. Lys141 carries the post-translational modification N6-acetyllysine; alternate. Lys141 carries the post-translational modification N6-succinyllysine; alternate. Residue Lys178 is modified to N6-acetyllysine.

This sequence belongs to the Rho GDI family. In terms of assembly, monomer. Interacts with FER. Interacts with PLXNB3. Forms a heterodimer with RAC1. Interacts with RHOA, the affinity is increased by three orders of magnitude when RHOA is prenylated. Interacts with PSMD10; the interaction increases ARHGDIA association with RHOA, leading to ARHGDIA-mediated inactivation of RHOA and ROCK and prolonged AKT activation. Interacts with KANK2; the interaction is direct and may regulate the interaction of ARHGDIA with RHOA, RAC1 and CDC42. Interacts with RHOC. Interacts with CDC42. Interacts with NGFR (via death domain); NGFR binding decreases the affinity for RHOA. In terms of tissue distribution, brain, lung, thymus, spleen, small intestine, and kidney, and weakly in heart and liver.

Its subcellular location is the cytoplasm. Controls Rho proteins homeostasis. Regulates the GDP/GTP exchange reaction of the Rho proteins by inhibiting the dissociation of GDP from them, and the subsequent binding of GTP to them. Retains Rho proteins such as CDC42, RAC1 and RHOA in an inactive cytosolic pool, regulating their stability and protecting them from degradation. Actively involved in the recycling and distribution of activated Rho GTPases in the cell, mediates extraction from membranes of both inactive and activated molecules due its exceptionally high affinity for prenylated forms. Through the modulation of Rho proteins, may play a role in cell motility regulation. In glioma cells, inhibits cell migration and invasion by mediating the signals of SEMA5A and PLXNB3 that lead to inactivation of RAC1. This Bos taurus (Bovine) protein is Rho GDP-dissociation inhibitor 1 (ARHGDIA).